The following is a 159-amino-acid chain: Large ribosomal subunit protein uL22c (159 aa).

Belongs to the universal ribosomal protein uL22 family. Part of the 50S ribosomal subunit.

The protein localises to the plastid. It is found in the chloroplast. In terms of biological role, this protein binds specifically to 23S rRNA. Its function is as follows. The globular domain of the protein is located near the polypeptide exit tunnel on the outside of the subunit, while an extended beta-hairpin is found that lines the wall of the exit tunnel in the center of the 70S ribosome. In Ipomoea purpurea (Common morning glory), this protein is Large ribosomal subunit protein uL22c (rpl22).